Reading from the N-terminus, the 365-residue chain is MAVASRKLGALVLVAVLCLSLPTGCLSSQQAAALFIFGDSVFDPGNNNHINTHVNFKANFWPYGQSYFSSPTGRFSDGRIIPDFIAEYASLPIIPAYLEPNNDFTHGANFASAGAGALIASHAGLAVGLQTQLRYFGDLVDHYRQNLGDIKSRQLLSDAVYLFSCGGNDYQSPYYPYTQEQYVDIVIGNMTNVIKGIYEKGGRKFGVVNVPLIGCWPGMRAKQPGNTCNTEVDELTRLHNQAFAKRLEQLEKQLEGFVYAKFDLSTAILNRMKNPSKYGFKEGESACCGSGPFGGNYDCGRIKEFGLCDNATEYFFFDPFHPNELASRQFAEMFWDGDSMVTQPYNLKALFEGKPSTKYLPNDEL.

Positions methionine 1–serine 27 are cleaved as a signal peptide. Serine 40 serves as the catalytic Nucleophile. Asparagine 189 and asparagine 310 each carry an N-linked (GlcNAc...) asparagine glycan. Catalysis depends on charge relay system residues aspartate 318 and histidine 321.

Belongs to the 'GDSL' lipolytic enzyme family. In terms of tissue distribution, restricted to the pericarp during achene maturation. Expressed in the leaves of mature plants and seedlings, as well as in buds and flowers. Present in disk florets.

The protein resides in the secreted. It localises to the extracellular space. The catalysed reaction is (Z,S)-pyrethrolone + (1R,3R)-chrysanthemoyl-CoA = pyrethrin I + CoA. It carries out the reaction (Z,S)-pyrethrolone + (1R,3R)-pyrethroyl-CoA = pyrethrin II + CoA. It catalyses the reaction (Z,S)-jasmololone + (1R,3R)-chrysanthemoyl-CoA = jasmolin I + CoA. The enzyme catalyses (Z,S)-cinerolone + (1R,3R)-chrysanthemoyl-CoA = cinerin I + CoA. The catalysed reaction is (Z,S)-jasmololone + (1R,3R)-pyrethroyl-CoA = jasmolin II + CoA. It carries out the reaction (Z,S)-cinerolone + (1R,3R)-pyrethroyl-CoA = cinerin II + CoA. Its pathway is isoprenoid biosynthesis. In terms of biological role, component of the monoterpenoid pyrethrins biosynthesis; pyrethrins are widely used plant-derived pesticide. Acyltransferase that catalyzes the esterification of terpene acids and lipid alcohol substrates into pyrethrins; mediates the transfer of a chrysanthemoyl moiety from the coenzyme A (CoA) thio-ester chrysanthemoyl CoA to pyrethrolone, and, to a lower extent, to jasmololone and cinerolone thus producing pyrethrins (e.g. pyrethrin type I). Can also use pyrethroyl CoA as substrate. Also has esterase activity, being able to cleave the ester bond of pyrethrin I, p-nitrophenyl butanoate and p-nitrophenyl octanoate to produce pyrethrolone and p-nitrophenol, respectively. The chain is GDSL lipase from Tanacetum cinerariifolium (Dalmatian daisy).